The chain runs to 141 residues: Large ribosomal subunit protein uL11 (141 aa).

This sequence belongs to the universal ribosomal protein uL11 family. As to quaternary structure, part of the ribosomal stalk of the 50S ribosomal subunit. Interacts with L10 and the large rRNA to form the base of the stalk. L10 forms an elongated spine to which L12 dimers bind in a sequential fashion forming a multimeric L10(L12)X complex. Post-translationally, one or more lysine residues are methylated.

Functionally, forms part of the ribosomal stalk which helps the ribosome interact with GTP-bound translation factors. In Chlamydia pneumoniae (Chlamydophila pneumoniae), this protein is Large ribosomal subunit protein uL11.